Consider the following 302-residue polypeptide: S-adenosylmethionine sensor upstream of mTORC1 (302 aa).

S-adenosyl-L-homocysteine contacts are provided by Arg-73, Gly-132, and Asp-150. S-adenosyl-L-methionine contacts are provided by Arg-73, Gly-132, Asp-150, Leu-151, Asp-162, Phe-163, and Ser-196. The S-adenosyl-L-homocysteine site is built by Asp-162, Phe-163, and Ser-196.

It belongs to the BMT2/SAMTOR family.

Its function is as follows. S-adenosyl-L-methionine-binding protein. It is unclear whether this protein acts as a sensor of S-adenosyl-L-methionine to signal methionine sufficiency to mTORC1. Probably acts as a S-adenosyl-L-methionine-dependent methyltransferase. The chain is S-adenosylmethionine sensor upstream of mTORC1 from Drosophila melanogaster (Fruit fly).